The following is a 237-amino-acid chain: Ubiquitin-conjugating enzyme E2 34 (237 aa).

The region spanning 5–162 (ACIKRLQKEY…FPEYVEKYNQ (158 aa)) is the UBC core domain. Cysteine 87 (glycyl thioester intermediate) is an active-site residue. A disordered region spans residues 168-207 (QATTQLTTPESPQKSDTKVESEKTIDPTKGDSEGGLKERK). Positions 180–204 (QKSDTKVESEKTIDPTKGDSEGGLK) are enriched in basic and acidic residues. Residues 214–234 (LPAWIILLLVSVFGVVMALPL) traverse the membrane as a helical segment.

It belongs to the ubiquitin-conjugating enzyme family.

It localises to the membrane. The enzyme catalyses S-ubiquitinyl-[E1 ubiquitin-activating enzyme]-L-cysteine + [E2 ubiquitin-conjugating enzyme]-L-cysteine = [E1 ubiquitin-activating enzyme]-L-cysteine + S-ubiquitinyl-[E2 ubiquitin-conjugating enzyme]-L-cysteine.. The protein operates within protein modification; protein ubiquitination. Functionally, accepts the ubiquitin from the E1 complex and catalyzes its covalent attachment to other proteins. The protein is Ubiquitin-conjugating enzyme E2 34 (UBC34) of Arabidopsis thaliana (Mouse-ear cress).